The following is a 384-amino-acid chain: Flap endonuclease 1 (384 aa).

The segment at 1 to 105 (MGIKGLTKLL…GELAKRKDKR (105 aa)) is N-domain. Asp34 contributes to the Mg(2+) binding site. Arg71 contributes to the DNA binding site. Positions 87, 159, 161, 180, and 182 each coordinate Mg(2+). The interval 123 to 254 (EIEKLSKRTV…VNALKYIKQY (132 aa)) is I-domain. Glu159 serves as a coordination point for DNA. DNA is bound by residues Gly232 and Asp234. Asp234 serves as a coordination point for Mg(2+). The interaction with PCNA stretch occupies residues 337 to 345 (GQNRLETFF). Residues 353–384 (STVGKRKEPEKGKGKFGAAGGKKSKGVTKRKF) are disordered. Basic residues predominate over residues 374–384 (KKSKGVTKRKF).

The protein belongs to the XPG/RAD2 endonuclease family. FEN1 subfamily. Interacts with PCNA. Three molecules of FEN1 bind to one PCNA trimer with each molecule binding to one PCNA monomer. PCNA stimulates the nuclease activity without altering cleavage specificity. Mg(2+) is required as a cofactor. Post-translationally, phosphorylated. Phosphorylation upon DNA damage induces relocalization to the nuclear plasma.

It localises to the nucleus. It is found in the nucleolus. The protein localises to the nucleoplasm. The protein resides in the mitochondrion. In terms of biological role, structure-specific nuclease with 5'-flap endonuclease and 5'-3' exonuclease activities involved in DNA replication and repair. During DNA replication, cleaves the 5'-overhanging flap structure that is generated by displacement synthesis when DNA polymerase encounters the 5'-end of a downstream Okazaki fragment. It enters the flap from the 5'-end and then tracks to cleave the flap base, leaving a nick for ligation. Also involved in the long patch base excision repair (LP-BER) pathway, by cleaving within the apurinic/apyrimidinic (AP) site-terminated flap. Acts as a genome stabilization factor that prevents flaps from equilibrating into structures that lead to duplications and deletions. Also possesses 5'-3' exonuclease activity on nicked or gapped double-stranded DNA, and exhibits RNase H activity. Also involved in replication and repair of rDNA and in repairing mitochondrial DNA. This is Flap endonuclease 1 from Micromonas commoda (strain RCC299 / NOUM17 / CCMP2709) (Picoplanktonic green alga).